Reading from the N-terminus, the 1806-residue chain is Non-reducing polyketide synthase pks12 (1806 aa).

The Starter acyltransferase (SAT) domain maps to 30–191; the sequence is TDTMSGMISL…TKLHLRGKVH (162 aa). One can recognise a Ketosynthase family 3 (KS3) domain in the interval 330–755; it reads ENAIAIVGAG…GSNSALICGE (426 aa). Active-site for beta-ketoacyl synthase activity residues include cysteine 504, histidine 639, and histidine 678. Residues 860–1156 form a malonyl-CoA:ACP transacylase (MAT) domain region; the sequence is LAFSGQSKQT…HNPSQHTFLG (297 aa). Positions 862–1147 constitute a Malonyl-CoA:ACP transacylase (MAT) domain; it reads FSGQSKQTIG…IIPMVKRATH (286 aa). The active-site For acyl/malonyl transferase activity is the serine 947. An N-terminal hotdog fold region spans residues 1249–1383; sequence PQTPPLKLVT…GRFSVTSHID (135 aa). The PKS/mFAS DH domain occupies 1249 to 1558; the sequence is PQTPPLKLVT…FSRFPIAKLE (310 aa). Residues 1249 to 1558 form a product template (PT) domain region; that stretch reads PQTPPLKLVT…FSRFPIAKLE (310 aa). Catalysis depends on histidine 1288, which acts as the Proton acceptor; for dehydratase activity. Residues 1404 to 1558 form a C-terminal hotdog fold region; that stretch reads SERLMAGRAY…FSRFPIAKLE (155 aa). Residue aspartate 1468 is the Proton donor; for dehydratase activity of the active site. The Carrier domain occupies 1727–1804; sequence QSKLRIRQRI…ELVDYVVISS (78 aa). Serine 1764 carries the O-(pantetheine 4'-phosphoryl)serine modification.

Pantetheine 4'-phosphate is required as a cofactor.

Its pathway is secondary metabolite biosynthesis. Functionally, non-reducing polyketide synthase; part of the gene cluster that mediates the biosynthesis of mitorubrinol and mitorubrinic acid, two virulence factors that improve T.marneffei intracellular survival in macrophages. The two polyketide synthases pks12 and pks11 are probably responsible for sequential use in the biosynthesis of mitorubrinol and mitorubrinic acid. The first part of the biosynthesis is probably catalyzed by pks12, which synthesized orsellinic acid. This tetraketide is then used as a starter unit for pks11, which possesses a SAT domain, in the second part of the biosynthesis. Pks11, contains a methyltransferase domain, also served that methylates the products, using a methyl group from S-adenosylmethionine. This chain is Non-reducing polyketide synthase pks12, found in Talaromyces marneffei (Penicillium marneffei).